Consider the following 92-residue polypeptide: YcgL domain-containing protein Sputcn32_1766 (92 aa).

Residues 1 to 85 (MLCTVYKSTR…PQVNLLAEHK (85 aa)) enclose the YcgL domain.

The sequence is that of YcgL domain-containing protein Sputcn32_1766 from Shewanella putrefaciens (strain CN-32 / ATCC BAA-453).